The chain runs to 366 residues: 3-dehydroquinate synthase (366 aa).

Residues Asp-75–Lys-80, Gly-109–Asp-113, Thr-133–Thr-134, Lys-146, Lys-155, and Cys-173–Thr-176 contribute to the NAD(+) site. Zn(2+) is bound by residues Glu-188, His-251, and His-268.

Belongs to the sugar phosphate cyclases superfamily. Dehydroquinate synthase family. Co(2+) serves as cofactor. Zn(2+) is required as a cofactor. The cofactor is NAD(+).

It is found in the cytoplasm. The catalysed reaction is 7-phospho-2-dehydro-3-deoxy-D-arabino-heptonate = 3-dehydroquinate + phosphate. It functions in the pathway metabolic intermediate biosynthesis; chorismate biosynthesis; chorismate from D-erythrose 4-phosphate and phosphoenolpyruvate: step 2/7. Catalyzes the conversion of 3-deoxy-D-arabino-heptulosonate 7-phosphate (DAHP) to dehydroquinate (DHQ). This Vibrio campbellii (strain ATCC BAA-1116) protein is 3-dehydroquinate synthase.